A 120-amino-acid chain; its full sequence is Ribonuclease P protein component (120 aa).

This sequence belongs to the RnpA family. Consists of a catalytic RNA component (M1 or rnpB) and a protein subunit.

It carries out the reaction Endonucleolytic cleavage of RNA, removing 5'-extranucleotides from tRNA precursor.. RNaseP catalyzes the removal of the 5'-leader sequence from pre-tRNA to produce the mature 5'-terminus. It can also cleave other RNA substrates such as 4.5S RNA. The protein component plays an auxiliary but essential role in vivo by binding to the 5'-leader sequence and broadening the substrate specificity of the ribozyme. The sequence is that of Ribonuclease P protein component from Mycobacterium marinum (strain ATCC BAA-535 / M).